Reading from the N-terminus, the 384-residue chain is tRNA-dihydrouridine(20) synthase [NAD(P)+] (384 aa).

FMN-binding positions include 12–14 (PMV) and Q88. The Proton donor role is filled by C117. FMN-binding positions include K160, H188, 222 to 224 (NGA), and 249 to 250 (AE). Residues 359 to 384 (KQKRKQTDHIGSDTKKQKVVPLPTDI) form a disordered region. Positions 363–374 (KQTDHIGSDTKK) are enriched in basic and acidic residues.

The protein belongs to the Dus family. Dus2 subfamily. Monomer. The cofactor is FMN. N-glycosylated.

It is found in the cytoplasm. The protein localises to the nucleus. The enzyme catalyses 5,6-dihydrouridine(20) in tRNA + NADP(+) = uridine(20) in tRNA + NADPH + H(+). It catalyses the reaction 5,6-dihydrouridine(20) in tRNA + NAD(+) = uridine(20) in tRNA + NADH + H(+). It carries out the reaction a 5,6-dihydrouridine in mRNA + NAD(+) = a uridine in mRNA + NADH + H(+). The catalysed reaction is a 5,6-dihydrouridine in mRNA + NADP(+) = a uridine in mRNA + NADPH + H(+). Catalyzes the NADPH-dependent synthesis of dihydrouridine, a modified base found in the D-loop of most tRNAs. Specifically modifies U20 in cytoplasmic tRNAs. Also able to mediate dihydrouridylation of some mRNAs, thereby affecting their translation. This is tRNA-dihydrouridine(20) synthase [NAD(P)+] (SMM1) from Saccharomyces cerevisiae (strain ATCC 204508 / S288c) (Baker's yeast).